A 358-amino-acid chain; its full sequence is Triacylglycerol lipase (358 aa).

Residues 1–39 (MVRSMRSRVAARAVAWALAVMPLAGAAGLTMAASPAAVA) form the signal peptide. The region spanning 48 to 327 (YPVILVHGLA…TSYHWNHLDE (280 aa)) is the AB hydrolase-1 domain. Leu-56 is a substrate binding site. Ser-126 (nucleophile) is an active-site residue. Residue Gln-127 coordinates substrate. Cys-229 and Cys-308 are oxidised to a cystine. Position 280 (Asp-280) interacts with Ca(2+). Catalysis depends on charge relay system residues Asp-302 and His-324. 3 residues coordinate Ca(2+): Asp-326, Gln-330, and Val-334.

It belongs to the AB hydrolase superfamily. Pseudomonas lipase family. In terms of assembly, monomer. Interacts with lipase-specific foldase Lif. Requires Ca(2+) as cofactor.

Its subcellular location is the secreted. It catalyses the reaction a triacylglycerol + H2O = a diacylglycerol + a fatty acid + H(+). Functionally, catalyzes the hydrolysis of triacylglycerol. The sequence is that of Triacylglycerol lipase from Burkholderia plantarii.